A 156-amino-acid chain; its full sequence is Beta-defensin 125 (156 aa).

Residues 1–20 (MNILMLTFIICGLLTRVTKG) form the signal peptide. 3 cysteine pairs are disulfide-bonded: C27-C55, C35-C49, and C39-C56. Positions 68 to 156 (PAFPVIHLED…PPSQTALTHN (89 aa)) are excised as a propeptide. Residues 108 to 156 (GETMTPETNTPETTMPPSEATTPETTMPPSETATSETMPPPSQTALTHN) are disordered. Residues 109–144 (ETMTPETNTPETTMPPSEATTPETTMPPSETATSET) are compositionally biased toward low complexity.

Belongs to the beta-defensin family.

It is found in the secreted. In terms of biological role, has antibacterial activity. The chain is Beta-defensin 125 (DEFB125) from Homo sapiens (Human).